The chain runs to 107 residues: Large ribosomal subunit protein uL24 (107 aa).

It belongs to the universal ribosomal protein uL24 family. Part of the 50S ribosomal subunit.

Its function is as follows. One of two assembly initiator proteins, it binds directly to the 5'-end of the 23S rRNA, where it nucleates assembly of the 50S subunit. One of the proteins that surrounds the polypeptide exit tunnel on the outside of the subunit. The chain is Large ribosomal subunit protein uL24 from Solidesulfovibrio magneticus (strain ATCC 700980 / DSM 13731 / RS-1) (Desulfovibrio magneticus).